The sequence spans 171 residues: Pro-corazonin (171 aa).

An N-terminal signal peptide occupies residues 1–20; sequence MLHTRTIALLLVGLVVLVNA. Position 21 is a pyrrolidone carboxylic acid (glutamine 21). Residue asparagine 31 is modified to Asparagine amide. A propeptide spanning residues 82–171 is cleaved from the precursor; it reads FLRNPCDLRV…GFSDHRQKIA (90 aa).

It belongs to the corazonin family.

The protein resides in the secreted. In terms of biological role, cardioactive peptide. Corazonin is probably involved in the physiological regulation of the heart beat. The polypeptide is Pro-corazonin (Anopheles gambiae (African malaria mosquito)).